The sequence spans 101 residues: DNA-directed RNA polymerase subunit beta (101 aa).

The interval Lys-74–His-101 is disordered. Positions Ser-86–His-101 are enriched in basic and acidic residues.

The protein belongs to the RNA polymerase beta chain family. In terms of assembly, the RNAP catalytic core consists of 2 alpha, 1 beta, 1 beta' and 1 omega subunit. When a sigma factor is associated with the core the holoenzyme is formed, which can initiate transcription.

It catalyses the reaction RNA(n) + a ribonucleoside 5'-triphosphate = RNA(n+1) + diphosphate. Its function is as follows. DNA-dependent RNA polymerase catalyzes the transcription of DNA into RNA using the four ribonucleoside triphosphates as substrates. This is DNA-directed RNA polymerase subunit beta (rpoB) from Mycolicibacterium peregrinum (Mycobacterium peregrinum).